Reading from the N-terminus, the 201-residue chain is 3-isopropylmalate dehydratase small subunit (201 aa).

It belongs to the LeuD family. LeuD type 1 subfamily. In terms of assembly, heterodimer of LeuC and LeuD.

The catalysed reaction is (2R,3S)-3-isopropylmalate = (2S)-2-isopropylmalate. It participates in amino-acid biosynthesis; L-leucine biosynthesis; L-leucine from 3-methyl-2-oxobutanoate: step 2/4. Catalyzes the isomerization between 2-isopropylmalate and 3-isopropylmalate, via the formation of 2-isopropylmaleate. The chain is 3-isopropylmalate dehydratase small subunit from Methylorubrum extorquens (strain ATCC 14718 / DSM 1338 / JCM 2805 / NCIMB 9133 / AM1) (Methylobacterium extorquens).